We begin with the raw amino-acid sequence, 642 residues long: Bifunctional protein glk (642 aa).

The tract at residues 1–340 (MSTGAQSKAA…QLSNRSGGAS (340 aa)) is glucokinase. 23–28 (ADVGGT) contributes to the ATP binding site. The HTH rpiR-type domain maps to 341–417 (SAVFERIRQM…LKLATGLTGT (77 aa)). Positions 341 to 642 (SAVFERIRQM…SPAAKDVARD (302 aa)) are putative HTH-type transcriptional regulator. A DNA-binding region (H-T-H motif) is located at residues 377–396 (IVDIARKADVSQPTVIRFCR). Positions 461 to 600 (AIEILNGARR…AVGVAIRRAS (140 aa)) constitute an SIS domain. The chain crosses the membrane as a helical span at residues 576–596 (SMISRILHLLMIDILAVGVAI).

It in the N-terminal section; belongs to the bacterial glucokinase family.

Its subcellular location is the membrane. The enzyme catalyses D-glucose + ATP = D-glucose 6-phosphate + ADP + H(+). In Burkholderia lata (strain ATCC 17760 / DSM 23089 / LMG 22485 / NCIMB 9086 / R18194 / 383), this protein is Bifunctional protein glk (glk).